We begin with the raw amino-acid sequence, 504 residues long: Maturase K (504 aa).

It belongs to the intron maturase 2 family. MatK subfamily.

The protein localises to the plastid. It is found in the chloroplast. Functionally, usually encoded in the trnK tRNA gene intron. Probably assists in splicing its own and other chloroplast group II introns. This is Maturase K from Fagus japonica (Japanese beech).